Consider the following 233-residue polypeptide: Translation initiation factor IF-3 (233 aa).

2 disordered regions span residues 1–21 (MAIQ…RTNR) and 184–233 (LQSQ…AAQR). A compositionally biased stretch (low complexity) spans 193–211 (AAAAAAPAAAPAAPAAGAP). Residues 212-223 (APAPAPAAPAPA) show a composition bias toward pro residues. A compositionally biased stretch (low complexity) spans 224 to 233 (PAAADPAAQR).

The protein belongs to the IF-3 family. As to quaternary structure, monomer.

The protein localises to the cytoplasm. Its function is as follows. IF-3 binds to the 30S ribosomal subunit and shifts the equilibrium between 70S ribosomes and their 50S and 30S subunits in favor of the free subunits, thus enhancing the availability of 30S subunits on which protein synthesis initiation begins. This chain is Translation initiation factor IF-3, found in Anaeromyxobacter dehalogenans (strain 2CP-C).